Consider the following 536-residue polypeptide: Thiamine transport system permease protein ThiP (536 aa).

12 consecutive transmembrane segments (helical) span residues 16–36, 58–78, 95–115, 134–154, 199–219, 240–260, 291–311, 334–354, 373–393, 404–424, 463–483, and 506–526; these read GLCAAALMITVSLAAFLALWL, FSFWQAFLSAVLSVVPAVFLA, LCAMTLILPVLVAVFGILSVY, FSPYGLQGILLAHVFFNLPMA, VAALIFMLCFASFATVLSLGG, PARAAMLALIQMVCCLALVLL, DALLIVLALLLLLPPLVAVVV, SLRIALAAGVLCVVLTMMLLW, LSGMLILAMPGIVLATGFFLL, ADGIVIFTNALMAIPYALKVL, AQALAFACVLSIGDFGVVALF, and DGAVTALILLLLCFTLFTLIE. The ABC transmembrane type-1 1 domain occupies 56-261; it reads VRFSFWQAFL…VCCLALVLLS (206 aa). Residues 331 to 525 form the ABC transmembrane type-1 2 domain; that stretch reads VWTSLRIALA…LLCFTLFTLI (195 aa).

It belongs to the binding-protein-dependent transport system permease family. The complex is composed of two ATP-binding proteins (ThiQ), two transmembrane proteins (ThiP) and a solute-binding protein (ThiB).

The protein localises to the cell inner membrane. Its function is as follows. Part of the ABC transporter complex ThiBPQ involved in thiamine import. Probably responsible for the translocation of the substrate across the membrane. Is also involved in thiamine pyrophosphate transport. The chain is Thiamine transport system permease protein ThiP from Salmonella typhimurium (strain LT2 / SGSC1412 / ATCC 700720).